We begin with the raw amino-acid sequence, 147 residues long: Secreted RxLR effector protein BLN04 (147 aa).

A signal peptide spans 1–23; it reads MATMRRICFLFVFNLAVATSTQG. The short motif at 58-61 is the dEER element; it reads SEER. A helical transmembrane segment spans residues 117–137; that stretch reads VYIYTILFLSIPIILGVAMYI.

The protein belongs to the RxLR effector family. Interacts with host transcription factor NAC069.

It is found in the secreted. The protein localises to the host membrane. Secreted effector that inhibits stress-induced relocalization of the transcription factor NAC069 to the nucleus, thus affecting its broad role in abiotic and biotic stress responses. The chain is Secreted RxLR effector protein BLN04 from Bremia lactucae (Lettuce downy mildew).